The following is a 244-amino-acid chain: Thiol S-methyltransferase TMT1B (244 aa).

The first 23 residues, 1–23 (MDILVPLLQLLVLLLTLPLHLMA), serve as a signal peptide directing secretion.

The protein belongs to the methyltransferase superfamily. As to expression, expressed in the liver.

It is found in the endoplasmic reticulum membrane. The protein resides in the lipid droplet. It localises to the microsome. The protein localises to the cytoplasm. Its subcellular location is the cytosol. The enzyme catalyses a thiol + S-adenosyl-L-methionine = a methyl thioether + S-adenosyl-L-homocysteine + H(+). Its function is as follows. Thiol S-methyltransferase that catalyzes the transfer of a methyl group from S-adenosyl-L-methionine to alkyl and phenolic thiol-containing acceptor substrates. Together with TMT1B accounts for most of S-thiol methylation activity in the endoplasmic reticulum of hepatocytes. Selectively methylates S-centered nucleophiles from metabolites such as hydrogen sulfide and dithiothreitol. The chain is Thiol S-methyltransferase TMT1B from Homo sapiens (Human).